The following is a 121-amino-acid chain: Protein yippee-like 5 (121 aa).

One can recognise a Yippee domain in the interval 13-110; it reads RLFSCANCDT…LERALVRESE (98 aa). 4 residues coordinate Zn(2+): C17, C20, C73, and C76. S118 is modified (phosphoserine).

It belongs to the yippee family. As to quaternary structure, identified in the CTLH complex that contains GID4, RANBP9 and/or RANBP10, MKLN1, MAEA, RMND5A (or alternatively its paralog RMND5B), GID8, ARMC8, WDR26 and YPEL5. Within this complex, MAEA, RMND5A (or alternatively its paralog RMND5B), GID8, WDR26, and RANBP9 and/or RANBP10 form the catalytic core, while GID4, MKLN1, ARMC8 and YPEL5 have ancillary roles. Interacts with RANBP9 and RANBP10.

The protein localises to the nucleus. The protein resides in the cytoplasm. Its subcellular location is the cytoskeleton. It localises to the microtubule organizing center. It is found in the centrosome. The protein localises to the spindle pole. The protein resides in the midbody. Component of the CTLH E3 ubiquitin-protein ligase complex that selectively accepts ubiquitin from UBE2H and mediates ubiquitination and subsequent proteasomal degradation of the transcription factor HBP1. Required for normal cell proliferation. This chain is Protein yippee-like 5 (YPEL5), found in Bos taurus (Bovine).